Consider the following 177-residue polypeptide: COMM domain-containing protein 4 (177 aa).

The COMM domain occupies 107–176 (SLHSLDWRVD…GAKLLMETVN (70 aa)).

This sequence belongs to the COMM domain-containing protein 4 family. In terms of assembly, component of the commander complex consisting of the CCC subcomplex and the retriever subcomplex. Component of the CCC subcomplex.

Functionally, scaffold protein in the commander complex that is essential for endosomal recycling of transmembrane cargos; the commander complex is composed of the CCC subcomplex and the retriever subcomplex. This chain is COMM domain-containing protein 4 (commd4), found in Dictyostelium discoideum (Social amoeba).